Here is a 47-residue protein sequence, read N- to C-terminus: Photosystem II reaction center protein K (47 aa).

The propeptide occupies 1–10 (MNIGFDMILA). The helical transmembrane segment at 22-42 (LVDVLPVIPLLFLLLAFVWQA) threads the bilayer.

This sequence belongs to the PsbK family. In terms of assembly, PSII is composed of 1 copy each of membrane proteins PsbA, PsbB, PsbC, PsbD, PsbE, PsbF, PsbH, PsbI, PsbJ, PsbK, PsbL, PsbM, PsbT, PsbX, PsbY, PsbZ, Psb30/Ycf12, at least 3 peripheral proteins of the oxygen-evolving complex and a large number of cofactors. It forms dimeric complexes.

It is found in the plastid. The protein localises to the chloroplast thylakoid membrane. Its function is as follows. One of the components of the core complex of photosystem II (PSII). PSII is a light-driven water:plastoquinone oxidoreductase that uses light energy to abstract electrons from H(2)O, generating O(2) and a proton gradient subsequently used for ATP formation. It consists of a core antenna complex that captures photons, and an electron transfer chain that converts photonic excitation into a charge separation. The polypeptide is Photosystem II reaction center protein K (Mesostigma viride (Green alga)).